Consider the following 237-residue polypeptide: Purine nucleoside phosphorylase DeoD-type (237 aa).

Histidine 5 lines the a purine D-ribonucleoside pocket. Residues glycine 21, arginine 25, arginine 44, and 88 to 91 (RVGS) contribute to the phosphate site. Residues 180–182 (EME) and 204–205 (SD) contribute to the a purine D-ribonucleoside site. Catalysis depends on aspartate 205, which acts as the Proton donor.

Belongs to the PNP/UDP phosphorylase family. In terms of assembly, homohexamer; trimer of homodimers.

It catalyses the reaction a purine D-ribonucleoside + phosphate = a purine nucleobase + alpha-D-ribose 1-phosphate. The catalysed reaction is a purine 2'-deoxy-D-ribonucleoside + phosphate = a purine nucleobase + 2-deoxy-alpha-D-ribose 1-phosphate. Functionally, catalyzes the reversible phosphorolytic breakdown of the N-glycosidic bond in the beta-(deoxy)ribonucleoside molecules, with the formation of the corresponding free purine bases and pentose-1-phosphate. In Edwardsiella ictaluri (strain 93-146), this protein is Purine nucleoside phosphorylase DeoD-type.